Reading from the N-terminus, the 70-residue chain is FYYINPREFVNKKVCLDREKSSPFECGFDPLEFLSYPLFIRFFVITLIFLIFDVEIYLLLPMVYLNMSSP.

The helical transmembrane segment at 42–62 (FFVITLIFLIFDVEIYLLLPM) threads the bilayer.

It belongs to the complex I subunit 3 family.

Its subcellular location is the mitochondrion membrane. The enzyme catalyses a ubiquinone + NADH + 5 H(+)(in) = a ubiquinol + NAD(+) + 4 H(+)(out). Its function is as follows. Core subunit of the mitochondrial membrane respiratory chain NADH dehydrogenase (Complex I) that is believed to belong to the minimal assembly required for catalysis. Complex I functions in the transfer of electrons from NADH to the respiratory chain. The immediate electron acceptor for the enzyme is believed to be ubiquinone. In Artemia salina (Brine shrimp), this protein is NADH-ubiquinone oxidoreductase chain 3 (ND3).